The chain runs to 199 residues: Recombination protein RecR (199 aa).

The segment at 58–73 (CKKCFNLTSEDECEIC) adopts a C4-type zinc-finger fold. The region spanning 81–175 (KLICVVAETK…KVTRIAYGLP (95 aa)) is the Toprim domain.

It belongs to the RecR family.

In terms of biological role, may play a role in DNA repair. It seems to be involved in an RecBC-independent recombinational process of DNA repair. It may act with RecF and RecO. The chain is Recombination protein RecR from Prochlorococcus marinus (strain MIT 9301).